A 222-amino-acid polypeptide reads, in one-letter code: Tetratricopeptide repeat protein 9A (222 aa).

Disordered regions lie at residues 1–49 (MERK…AAAE) and 88–116 (KGLL…GRLS). The stretch at 56–89 (RAHEFKSQGAQCYKDKKFREAIGKYHRALLELKG) is one TPR 1 repeat. Serine 105 bears the Phosphoserine mark. TPR repeat units follow at residues 125–160 (AIEI…LKKE) and 161–194 (GENF…RTQQ).

The protein belongs to the TTC9 family.

This Homo sapiens (Human) protein is Tetratricopeptide repeat protein 9A (TTC9).